The chain runs to 503 residues: MEEFQRYLELDRSQQHYFLYPLIFQEYIYALAHDHGLNINRSILLENAGYDKKFSLLIVKRLIARMYQQNHLILSTNDSNQNRFLRRNKNLYSQMISEGFAVIVEIPFYLQLKSSLESKGIVKSHNLRSIHSIFPFLEDKISHLIYGLEILIPYPVHLEILVQTLRYWVKDASSLHLLRFFLHEYCNWNTPNKAGSSFSKRNQRLFFLLYNSHLCEYESIFIFLRNQSSHLRSTSSGTLLERIYFYGKIKYLVKVFVKAFQVNLLLLKDPFMHYVRYQGKSILASKGTPFLMKKWTYYFVNLWQCHFYLWSQPGRICINQLYNHSLDILGYLSSARLNPSMVRGQMLENSFLIDNAINKFDAIVPIIPLIGSLAKAKFCNVLGHPISKAVWTDLSDSDIIDQFGRICRNLSHYHSGSSQKKSLYRIKYILRLSCARTLARKHKSTVRAFLKRLGSGLLEEFFTAEEQVLYLTFPRASSASQRLYRRRIWYLDIICINDLANHE.

This sequence belongs to the intron maturase 2 family. MatK subfamily.

It localises to the plastid. It is found in the chloroplast. Functionally, usually encoded in the trnK tRNA gene intron. Probably assists in splicing its own and other chloroplast group II introns. In Panax quinquefolius (American ginseng), this protein is Maturase K.